A 519-amino-acid polypeptide reads, in one-letter code: Ubiquitin carboxyl-terminal hydrolase 30 (519 aa).

The Mitochondrial intermembrane portion of the chain corresponds to 1 to 52; it reads MSWAPVSTWSRRTPLAACCSAPELPPAGAWKACAAGSLRIGPQGRCKMMKNW. A helical transmembrane segment spans residues 53–73; sequence GMIGGIAAALAAGIYVLWGPI. Residues 74-519 lie on the Cytoplasmic side of the membrane; that stretch reads SDRKKYRKGL…HPEDQRAAEK (446 aa). The region spanning 85 to 504 is the USP domain; sequence PGLLNLGNTC…SAYLLFYERI (420 aa). Residue cysteine 94 is the Nucleophile of the active site. Residues 379–405 form a disordered region; the sequence is SKQPANHLSAAEQETTDGKEGGAQNPT. Histidine 455 functions as the Proton acceptor in the catalytic mechanism.

This sequence belongs to the peptidase C19 family.

The protein resides in the mitochondrion outer membrane. It catalyses the reaction Thiol-dependent hydrolysis of ester, thioester, amide, peptide and isopeptide bonds formed by the C-terminal Gly of ubiquitin (a 76-residue protein attached to proteins as an intracellular targeting signal).. Its function is as follows. Deubiquitinating enzyme that acts as a key inhibitor of mitophagy by counteracting the action of parkin (PRKN). This chain is Ubiquitin carboxyl-terminal hydrolase 30 (usp30), found in Xenopus tropicalis (Western clawed frog).